The sequence spans 357 residues: Histidinol-phosphate aminotransferase (357 aa).

Lysine 222 bears the N6-(pyridoxal phosphate)lysine mark.

It belongs to the class-II pyridoxal-phosphate-dependent aminotransferase family. Histidinol-phosphate aminotransferase subfamily. In terms of assembly, homodimer. The cofactor is pyridoxal 5'-phosphate.

The enzyme catalyses L-histidinol phosphate + 2-oxoglutarate = 3-(imidazol-4-yl)-2-oxopropyl phosphate + L-glutamate. Its pathway is amino-acid biosynthesis; L-histidine biosynthesis; L-histidine from 5-phospho-alpha-D-ribose 1-diphosphate: step 7/9. This is Histidinol-phosphate aminotransferase from Leuconostoc mesenteroides subsp. mesenteroides (strain ATCC 8293 / DSM 20343 / BCRC 11652 / CCM 1803 / JCM 6124 / NCDO 523 / NBRC 100496 / NCIMB 8023 / NCTC 12954 / NRRL B-1118 / 37Y).